Consider the following 427-residue polypeptide: Transcription factor MYB98 (427 aa).

The short motif at 195 to 202 (TRKLSSSS) is the Nuclear localization signal 1 element. HTH myb-type domains follow at residues 212-267 (KSTL…RPDI) and 268-318 (KKET…RRQF). 2 DNA-binding regions (H-T-H motif) span residues 240–263 (WSHIAQVLPGRIGKQCRERWHNHL) and 291–314 (WAEIAKRLPGRTENSIKNHWNATK). Residues 361 to 368 (NKKKDVVV) carry the Nuclear localization signal 2 motif.

As to expression, expressed at high levels in the synergid cells of the female gametophyte, and at lower levels in the endosperm of young seeds and the trichomes of young leaves and sepals.

The protein localises to the nucleus. Transcription factor that binds to the motif 5'-GTAACNT-3' in the promoter of target genes (e.g. DD11 and DD18) and promotes their expression within synergid cells (e.g. in the filiform apparatus) in ovules. Required for the formation of the filiform apparatus during synergid cell differentiation in the female gametophyte. Involved in pollen tube guidance to the micropyle. The protein is Transcription factor MYB98 of Arabidopsis thaliana (Mouse-ear cress).